The chain runs to 414 residues: Putative competence-damage inducible protein (414 aa).

The protein belongs to the CinA family.

The polypeptide is Putative competence-damage inducible protein (Clostridium novyi (strain NT)).